Here is a 161-residue protein sequence, read N- to C-terminus: Large ribosomal subunit protein uL15 (161 aa).

The tract at residues 1-43 is disordered; the sequence is MKLSDIADNAGARKKRMRVGRGIGSGKGKTSGRGGKGQTARSG. Over residues 21 to 37 the composition is skewed to gly residues; the sequence is RGIGSGKGKTSGRGGKG.

It belongs to the universal ribosomal protein uL15 family. In terms of assembly, part of the 50S ribosomal subunit.

Functionally, binds to the 23S rRNA. The protein is Large ribosomal subunit protein uL15 of Bradyrhizobium sp. (strain BTAi1 / ATCC BAA-1182).